Consider the following 194-residue polypeptide: Peptidyl-tRNA hydrolase (194 aa).

A tRNA-binding site is contributed by Tyr17. The Proton acceptor role is filled by His22. TRNA contacts are provided by Phe68, Asn70, and Asn116.

It belongs to the PTH family. Monomer.

The protein localises to the cytoplasm. The catalysed reaction is an N-acyl-L-alpha-aminoacyl-tRNA + H2O = an N-acyl-L-amino acid + a tRNA + H(+). Hydrolyzes ribosome-free peptidyl-tRNAs (with 1 or more amino acids incorporated), which drop off the ribosome during protein synthesis, or as a result of ribosome stalling. In terms of biological role, catalyzes the release of premature peptidyl moieties from peptidyl-tRNA molecules trapped in stalled 50S ribosomal subunits, and thus maintains levels of free tRNAs and 50S ribosomes. This chain is Peptidyl-tRNA hydrolase, found in Histophilus somni (strain 2336) (Haemophilus somnus).